The following is a 989-amino-acid chain: Phosphoenolpyruvate carboxylase (989 aa).

Active-site residues include His-175 and Lys-630.

The protein belongs to the PEPCase type 1 family. Mg(2+) is required as a cofactor.

The enzyme catalyses oxaloacetate + phosphate = phosphoenolpyruvate + hydrogencarbonate. Its function is as follows. Forms oxaloacetate, a four-carbon dicarboxylic acid source for the tricarboxylic acid cycle. The polypeptide is Phosphoenolpyruvate carboxylase (Prochlorococcus marinus subsp. pastoris (strain CCMP1986 / NIES-2087 / MED4)).